An 83-amino-acid chain; its full sequence is Evasin P1124 (83 aa).

The first 28 residues, 1–28 (MAVNVFTILQLAVFAAIVLNVNLHSVSA), serve as a signal peptide directing secretion. 3 disulfide bridges follow: C48–C66, C52–C68, and C62–C79. N51 is a glycosylation site (N-linked (GlcNAc...) asparagine).

The protein resides in the secreted. In terms of biological role, salivary chemokine-binding protein which binds to host chemokines CXCL1, CXCL2, CXCL3, CXCL5, CXCL6, CXCL12 and CXCL13. This Ixodes ricinus (Common tick) protein is Evasin P1124.